Consider the following 303-residue polypeptide: Glutaminase (303 aa).

Residues serine 61, asparagine 111, glutamate 155, asparagine 162, tyrosine 186, tyrosine 238, and valine 256 each coordinate substrate.

Belongs to the glutaminase family. In terms of assembly, homotetramer.

The enzyme catalyses L-glutamine + H2O = L-glutamate + NH4(+). This Marinomonas sp. (strain MWYL1) protein is Glutaminase.